We begin with the raw amino-acid sequence, 212 residues long: Phosphatidylserine decarboxylase proenzyme (212 aa).

The active-site Schiff-base intermediate with substrate; via pyruvic acid is Ser182. The residue at position 182 (Ser182) is a Pyruvic acid (Ser); by autocatalysis.

This sequence belongs to the phosphatidylserine decarboxylase family. PSD-A subfamily. Heterodimer of a large membrane-associated beta subunit and a small pyruvoyl-containing alpha subunit. The cofactor is pyruvate. Post-translationally, is synthesized initially as an inactive proenzyme. Formation of the active enzyme involves a self-maturation process in which the active site pyruvoyl group is generated from an internal serine residue via an autocatalytic post-translational modification. Two non-identical subunits are generated from the proenzyme in this reaction, and the pyruvate is formed at the N-terminus of the alpha chain, which is derived from the carboxyl end of the proenzyme. The post-translation cleavage follows an unusual pathway, termed non-hydrolytic serinolysis, in which the side chain hydroxyl group of the serine supplies its oxygen atom to form the C-terminus of the beta chain, while the remainder of the serine residue undergoes an oxidative deamination to produce ammonia and the pyruvoyl prosthetic group on the alpha chain.

The protein resides in the cell membrane. It carries out the reaction a 1,2-diacyl-sn-glycero-3-phospho-L-serine + H(+) = a 1,2-diacyl-sn-glycero-3-phosphoethanolamine + CO2. It functions in the pathway phospholipid metabolism; phosphatidylethanolamine biosynthesis; phosphatidylethanolamine from CDP-diacylglycerol: step 2/2. In terms of biological role, catalyzes the formation of phosphatidylethanolamine (PtdEtn) from phosphatidylserine (PtdSer). The protein is Phosphatidylserine decarboxylase proenzyme of Paraburkholderia phymatum (strain DSM 17167 / CIP 108236 / LMG 21445 / STM815) (Burkholderia phymatum).